Consider the following 700-residue polypeptide: Small ribosomal subunit protein uS3c (700 aa).

2 insert regions span residues asparagine 88–phenylalanine 196 and lysine 282–arginine 587.

It belongs to the universal ribosomal protein uS3 family. As to quaternary structure, part of the 30S ribosomal subunit.

It localises to the plastid. The protein resides in the chloroplast. The protein is Small ribosomal subunit protein uS3c (rps3) of Tetradesmus obliquus (Green alga).